The primary structure comprises 490 residues: UDP-N-acetylmuramate--L-alanine ligase (490 aa).

G126 to T132 contacts ATP.

The protein belongs to the MurCDEF family.

It localises to the cytoplasm. The catalysed reaction is UDP-N-acetyl-alpha-D-muramate + L-alanine + ATP = UDP-N-acetyl-alpha-D-muramoyl-L-alanine + ADP + phosphate + H(+). It functions in the pathway cell wall biogenesis; peptidoglycan biosynthesis. Cell wall formation. This is UDP-N-acetylmuramate--L-alanine ligase from Baumannia cicadellinicola subsp. Homalodisca coagulata.